The primary structure comprises 541 residues: Phosphoenolpyruvate carboxykinase (ATP) (541 aa).

Substrate is bound by residues Arg64, Tyr206, and Lys212. Residues Lys212, His231, and Gly247–Thr255 contribute to the ATP site. Residues Lys212 and His231 each contribute to the Mn(2+) site. Asp268 provides a ligand contact to Mn(2+). 3 residues coordinate ATP: Glu296, Arg332, and Thr454. Position 332 (Arg332) interacts with substrate.

Belongs to the phosphoenolpyruvate carboxykinase (ATP) family. In terms of assembly, monomer. Requires Mn(2+) as cofactor.

It localises to the cytoplasm. It catalyses the reaction oxaloacetate + ATP = phosphoenolpyruvate + ADP + CO2. It participates in carbohydrate biosynthesis; gluconeogenesis. In terms of biological role, involved in the gluconeogenesis. Catalyzes the conversion of oxaloacetate (OAA) to phosphoenolpyruvate (PEP) through direct phosphoryl transfer between the nucleoside triphosphate and OAA. This is Phosphoenolpyruvate carboxykinase (ATP) from Wigglesworthia glossinidia brevipalpis.